Consider the following 764-residue polypeptide: 5-methyltetrahydropteroyltriglutamate--homocysteine methyltransferase (764 aa).

5-methyltetrahydropteroyltri-L-glutamate contacts are provided by residues 16–19 and K117; that span reads RELK. L-homocysteine contacts are provided by residues 442–444 and E495; that span reads IGS. L-methionine-binding positions include 442 to 444 and E495; that span reads IGS. 5-methyltetrahydropteroyltri-L-glutamate is bound by residues 526–527 and W572; that span reads RC. D610 lines the L-homocysteine pocket. Position 610 (D610) interacts with L-methionine. E616 is a binding site for 5-methyltetrahydropteroyltri-L-glutamate. Residues H652, C654, and E676 each coordinate Zn(2+). The active-site Proton donor is H705. Residue C737 coordinates Zn(2+).

This sequence belongs to the vitamin-B12 independent methionine synthase family. Zn(2+) is required as a cofactor.

It catalyses the reaction 5-methyltetrahydropteroyltri-L-glutamate + L-homocysteine = tetrahydropteroyltri-L-glutamate + L-methionine. It participates in amino-acid biosynthesis; L-methionine biosynthesis via de novo pathway; L-methionine from L-homocysteine (MetE route): step 1/1. Its function is as follows. Catalyzes the transfer of a methyl group from 5-methyltetrahydrofolate to homocysteine resulting in methionine formation. This chain is 5-methyltetrahydropteroyltriglutamate--homocysteine methyltransferase, found in Bordetella petrii (strain ATCC BAA-461 / DSM 12804 / CCUG 43448).